The following is a 321-amino-acid chain: MNLKVGVLMDPIANIAIHKDTTFAMLLALQARQHEVYYLEPADIFLRNEKILGSMRRLQVADDPSQWFNLSESEIKPLHALDVLLMRKDPPFNMSYVYLTYLLELAEKQGLFVVNKPASLRDANEKLFTGWFPHCTPKTLVTSRKAILQEFIREQKEVVIKPLGAMAGESIFYLTVNDPNIPVVIETMTANGHQLVMAQRFIPEVKSGDKRIILIDGEPIPYTLARIPPKGDFRGNLARGAKGEGRELTDRDRWICEQVGPTLRKKGLWFVGLDIIGDYLTEINVTSPTGVRELQAQFDVDIAGQFIAFLETKYATTTDIE.

The ATP-grasp domain maps to 125-311 (EKLFTGWFPH…IAGQFIAFLE (187 aa)). 151–208 (FIREQKEVVIKPLGAMAGESIFYLTVNDPNIPVVIETMTANGHQLVMAQRFIPEVKSG) contributes to the ATP binding site. Positions 282 and 284 each coordinate Mg(2+).

It belongs to the prokaryotic GSH synthase family. Mg(2+) is required as a cofactor. The cofactor is Mn(2+).

It carries out the reaction gamma-L-glutamyl-L-cysteine + glycine + ATP = glutathione + ADP + phosphate + H(+). It participates in sulfur metabolism; glutathione biosynthesis; glutathione from L-cysteine and L-glutamate: step 2/2. The polypeptide is Glutathione synthetase (Coxiella burnetii (strain RSA 493 / Nine Mile phase I)).